The sequence spans 165 residues: Crossover junction endodeoxyribonuclease RuvC (165 aa).

Active-site residues include aspartate 7, glutamate 67, and aspartate 140. Mg(2+)-binding residues include aspartate 7, glutamate 67, and aspartate 140.

This sequence belongs to the RuvC family. As to quaternary structure, homodimer which binds Holliday junction (HJ) DNA. The HJ becomes 2-fold symmetrical on binding to RuvC with unstacked arms; it has a different conformation from HJ DNA in complex with RuvA. In the full resolvosome a probable DNA-RuvA(4)-RuvB(12)-RuvC(2) complex forms which resolves the HJ. Mg(2+) is required as a cofactor.

The protein resides in the cytoplasm. The catalysed reaction is Endonucleolytic cleavage at a junction such as a reciprocal single-stranded crossover between two homologous DNA duplexes (Holliday junction).. The RuvA-RuvB-RuvC complex processes Holliday junction (HJ) DNA during genetic recombination and DNA repair. Endonuclease that resolves HJ intermediates. Cleaves cruciform DNA by making single-stranded nicks across the HJ at symmetrical positions within the homologous arms, yielding a 5'-phosphate and a 3'-hydroxyl group; requires a central core of homology in the junction. The consensus cleavage sequence is 5'-(A/T)TT(C/G)-3'. Cleavage occurs on the 3'-side of the TT dinucleotide at the point of strand exchange. HJ branch migration catalyzed by RuvA-RuvB allows RuvC to scan DNA until it finds its consensus sequence, where it cleaves and resolves the cruciform DNA. The chain is Crossover junction endodeoxyribonuclease RuvC from Desulfitobacterium hafniense (strain DSM 10664 / DCB-2).